We begin with the raw amino-acid sequence, 223 residues long: Rho-related protein racE (223 aa).

18–25 (GDGAVGKT) serves as a coordination point for GTP. The Effector region motif lies at 40-48 (YVPTVFENY). GTP-binding positions include 65–69 (DTAGQ) and 123–126 (TKID). The tract at residues 187 to 223 (GMDKKSQDGSSSASGVPSGDKPTKGKAGKKKSGCIIL) is disordered. Positions 210 to 223 (KGKAGKKKSGCIIL) are enriched in basic residues. A Cysteine methyl ester modification is found at Cys-220. Cys-220 carries the S-geranylgeranyl cysteine lipid modification. Positions 221-223 (IIL) are cleaved as a propeptide — removed in mature form.

This sequence belongs to the small GTPase superfamily. Rho family. In terms of assembly, interacts with rgaA.

It is found in the cell membrane. Functionally, specifically required for cytokinesis. The polypeptide is Rho-related protein racE (racE) (Dictyostelium discoideum (Social amoeba)).